An 824-amino-acid chain; its full sequence is Glycophorin-binding protein 130 (824 aa).

Residues 84–88 (RILAE) carry the PEXEL motif motif. Disordered regions lie at residues 97–236 (EKTT…GQIM), 258–291 (NTDPNDEVERRNADNKEDLTSADPEGQIMREYAS), 310–334 (DPNDDVERRNADNKEDLTSADPEGQ), 358–384 (NTDPNDEVERRNADNKEDLTSADPEGQ), 408–431 (NTDPNDEVERRNADNKELTSSDPE), 457–482 (NTDPNDEVERRNADNKEDLTSADPEG), 507–532 (NTDPNDEVERRNADNKEDLTSADPEG), 559–582 (DPNDEVERRNADNKEDLTSADPEG), 659–683 (DPNDEVERRNADNKEDLTSADPEGQ), 711–733 (NDEVERRNADNKEDLTSADPEGQ), and 759–783 (DPNDDVERRNADNKEDLTSADPEGQ). 2 stretches are compositionally biased toward basic and acidic residues: residues 117-140 (TKKDEENKSVVTEEQKVESDSEKQ) and 174-198 (KKEESGKPEENKHANEASKKQEPKA). Over residues 200 to 228 (KVSQKPSTSTRSNNEVKIRAASNQETLTS) the composition is skewed to polar residues. GBP repeat units lie at residues 226 to 275 (LTSA…NKED), 276 to 325 (LTSA…NKED), 326 to 375 (LTSA…NKED), 376 to 424 (LTSA…DNKE), 425 to 474 (LTSS…NKED), 475 to 524 (LTSA…NKED), 525 to 574 (LTSA…NKED), 575 to 624 (LTSA…NKEE), 625 to 674 (LTSS…NKED), 675 to 724 (LTSA…NKED), 725 to 774 (LTSA…NKED), and 775 to 824 (LTSA…NNEA). Composition is skewed to basic and acidic residues over residues 264–276 (EVERRNADNKEDL), 314–326 (DVERRNADNKEDL), 364–376 (EVERRNADNKEDL), 414–426 (EVERRNADNKELT), 463–475 (EVERRNADNKEDL), 513–525 (EVERRNADNKEDL), 563–575 (EVERRNADNKEDL), 663–675 (EVERRNADNKEDL), 713–725 (EVERRNADNKEDL), and 763–775 (DVERRNADNKEDL).

In terms of assembly, interacts with host glycophorin.

It localises to the secreted. Its subcellular location is the cell surface. It is found in the host cytoplasm. Involved in merozoite invasion of host erythrocytes. The protein is Glycophorin-binding protein 130 of Plasmodium falciparum (isolate 3D7).